Reading from the N-terminus, the 89-residue chain is Co-chaperonin GroES (89 aa).

It belongs to the GroES chaperonin family. As to quaternary structure, heptamer of 7 subunits arranged in a ring. Interacts with the chaperonin GroEL.

It localises to the cytoplasm. Functionally, together with the chaperonin GroEL, plays an essential role in assisting protein folding. The GroEL-GroES system forms a nano-cage that allows encapsulation of the non-native substrate proteins and provides a physical environment optimized to promote and accelerate protein folding. GroES binds to the apical surface of the GroEL ring, thereby capping the opening of the GroEL channel. The sequence is that of Co-chaperonin GroES from Wolinella succinogenes (strain ATCC 29543 / DSM 1740 / CCUG 13145 / JCM 31913 / LMG 7466 / NCTC 11488 / FDC 602W) (Vibrio succinogenes).